We begin with the raw amino-acid sequence, 503 residues long: ESX-5 secretion system protein EccD5 (503 aa).

Helical transmembrane passes span 137–157 (VVAVQVGAGMVGTGVILASGV), 169–189 (LTTIFASVIAVLVLMVAMMLL), 200–220 (VADIMLVSGLAPLTVAAASAP), 224–244 (VGSPQAVLGFGVLSIAAALAL), 250–270 (RLAIYTAIVTICGLTTLASLS), 272–292 (MVAATSAVTLFATMLLICVVM), 359–379 (FLSGLLVGLGVLMVVSLTSLC), 414–434 (ITLAVTAVIVVAAVSVRYALV), 443–463 (IVASLLVLLPAAGMTAAAVVP), and 480–500 (YLCLMPIFPLAFWLMNVYAAI).

It belongs to the EccD/Snm4 family. In terms of assembly, part of the ESX-5 / type VII secretion system (T7SS), which is composed of cytosolic and membrane components. The ESX-5 membrane complex is composed of EccB5, EccC5, EccD5 and EccE5.

It localises to the cell inner membrane. Its function is as follows. Part of the ESX-5 specialized secretion system, which is responsible for the secretion of EsxN and a number of PE_PGRS and PPE proteins. This component is essential for ESX-5 complex stability and secretion. This chain is ESX-5 secretion system protein EccD5, found in Mycobacterium marinum (strain ATCC BAA-535 / M).